We begin with the raw amino-acid sequence, 356 residues long: Dihydroorotate dehydrogenase (quinone) (356 aa).

Residues 67 to 71 (PGFDK) and T91 contribute to the FMN site. K71 provides a ligand contact to substrate. Substrate is bound at residue 116-120 (NRMGF). Positions 147 and 178 each coordinate FMN. Residue N178 participates in substrate binding. The Nucleophile role is filled by S181. N183 is a binding site for substrate. K218 and S246 together coordinate FMN. 247 to 248 (NT) is a substrate binding site. FMN contacts are provided by residues G268, G297, and 318-319 (YS).

It belongs to the dihydroorotate dehydrogenase family. Type 2 subfamily. Monomer. The cofactor is FMN.

It localises to the cell membrane. The catalysed reaction is (S)-dihydroorotate + a quinone = orotate + a quinol. Its pathway is pyrimidine metabolism; UMP biosynthesis via de novo pathway; orotate from (S)-dihydroorotate (quinone route): step 1/1. Its function is as follows. Catalyzes the conversion of dihydroorotate to orotate with quinone as electron acceptor. The protein is Dihydroorotate dehydrogenase (quinone) of Sphingopyxis alaskensis (strain DSM 13593 / LMG 18877 / RB2256) (Sphingomonas alaskensis).